Here is a 446-residue protein sequence, read N- to C-terminus: Zinc finger protein 19 (446 aa).

One can recognise a KRAB domain in the interval 2–73 (VTFEDVAVHF…EAQDDPPAET (72 aa)). C2H2-type zinc fingers lie at residues 149 to 171 (FICEECGKSFSYFSYYARHQRIH), 177 to 199 (FECSECGKAFNGNSSLIRHQRIH), 205 to 227 (YQCEECGRAFNDNANLIRHQRIH), 233 to 255 (YYCTECGNSFTSSSEFVIHQRIH), 261 to 283 (YECNECGKAFVGNSPLLRHQKIH), 289 to 311 (YECNECGKSFGRTSHLSQHQRIH), 317 to 339 (YSCKVCGQAFNFHTKLTRHQRIH), 345 to 367 (FDCVDCGKAFSAQEQLKRHLRIH), and 373 to 395 (YVCDECGKAFTSKRNLHQHQRIH). The C2H2-type 10; degenerate zinc-finger motif lies at 401 to 423 (YEYSKYEKAFGTSSQLGHLEHVH).

Belongs to the krueppel C2H2-type zinc-finger protein family.

It localises to the nucleus. Functionally, may be involved in transcriptional regulation. The chain is Zinc finger protein 19 (ZNF19) from Pongo abelii (Sumatran orangutan).